We begin with the raw amino-acid sequence, 68 residues long: DNA-directed RNA polymerase subunit omega (68 aa).

Belongs to the RNA polymerase subunit omega family. The RNAP catalytic core consists of 2 alpha, 1 beta, 1 beta' and 1 omega subunit. When a sigma factor is associated with the core the holoenzyme is formed, which can initiate transcription.

The catalysed reaction is RNA(n) + a ribonucleoside 5'-triphosphate = RNA(n+1) + diphosphate. Its function is as follows. Promotes RNA polymerase assembly. Latches the N- and C-terminal regions of the beta' subunit thereby facilitating its interaction with the beta and alpha subunits. This chain is DNA-directed RNA polymerase subunit omega, found in Geobacter sp. (strain M21).